The following is a 2278-amino-acid chain: Protein Ycf2 (2278 aa).

1632–1639 (GSIGTGRS) contacts ATP.

This sequence belongs to the Ycf2 family.

The protein localises to the plastid. The protein resides in the chloroplast stroma. Probable ATPase of unknown function. Its presence in a non-photosynthetic plant (Epifagus virginiana) and experiments in tobacco indicate that it has an essential function which is probably not related to photosynthesis. The sequence is that of Protein Ycf2 from Solanum tuberosum (Potato).